The chain runs to 200 residues: Cytochrome c biogenesis ATP-binding export protein CcmA (200 aa).

The ABC transporter domain maps to 2 to 200 (LDVIELDFDY…NKADYEEYHL (199 aa)). An ATP-binding site is contributed by 34-41 (GSNGAGKT).

The protein belongs to the ABC transporter superfamily. CcmA exporter (TC 3.A.1.107) family. The complex is composed of two ATP-binding proteins (CcmA) and two transmembrane proteins (CcmB).

The protein resides in the cell inner membrane. The catalysed reaction is heme b(in) + ATP + H2O = heme b(out) + ADP + phosphate + H(+). In terms of biological role, part of the ABC transporter complex CcmAB involved in the biogenesis of c-type cytochromes; once thought to export heme, this seems not to be the case, but its exact role is uncertain. Responsible for energy coupling to the transport system. The polypeptide is Cytochrome c biogenesis ATP-binding export protein CcmA (Legionella pneumophila (strain Paris)).